The following is a 1226-amino-acid chain: Polyamine-transporting ATPase 13A3 (1226 aa).

At 1–28 the chain is on the cytoplasmic side; sequence MDREERKTINQGQEDEMEIYGYNLSRWK. An intramembrane segment occupies 29–49; the sequence is LAIVSLGVICSGGFLLLLLYW. Over 50 to 205 the chain is Cytoplasmic; it reads MPEWRVKATC…IAVKVPSVFK (156 aa). Ser98 carries the post-translational modification Phosphoserine. A helical transmembrane segment spans residues 206-226; sequence LLIKEVLNPFYIFQLFSVILW. The Lumenal segment spans residues 227 to 232; it reads STDEYY. The helical transmembrane segment at 233 to 253 threads the bilayer; that stretch reads YYALAIVVMSIVSIVSSLYSI. Residues 254-409 lie on the Cytoplasmic side of the membrane; it reads RKQYVMLHDM…KPTDFKLYRD (156 aa). A helical membrane pass occupies residues 410-430; that stretch reads AYLFLLCLVAVAGIGFIYTII. The Lumenal segment spans residues 431–448; it reads NSILNEVQVGVIIIESLD. The chain crosses the membrane as a helical span at residues 449-469; sequence IITITVPPALPAAMTAGIVYA. The Cytoplasmic portion of the chain corresponds to 470–940; the sequence is QRRLKKIGIF…ALITSFCVFK (471 aa). Asp498 functions as the 4-aspartylphosphate intermediate in the catalytic mechanism. The Mg(2+) site is built by Asp498 and Thr500. ATP contacts are provided by residues 498–500, Phe628, Arg684, and Asp750; that span reads DKT. Ser817 is modified (phosphoserine). Residues Asp883 and Asp887 each contribute to the Mg(2+) site. 883–887 provides a ligand contact to ATP; sequence DGAND. Residues 941–961 form a helical membrane-spanning segment; the sequence is FMALYSIIQYFSVTLLYSILS. A topological domain (lumenal) is located at residue Asn962. The chain crosses the membrane as a helical span at residues 963 to 983; that stretch reads LGDFQFLFIDLAIILVVVFTM. The Cytoplasmic portion of the chain corresponds to 984–999; that stretch reads SLNPAWKELVAQRPPS. The helical transmembrane segment at 1000-1020 threads the bilayer; the sequence is GLISGALLFSVLSQIIICIGF. Residues 1021–1073 lie on the Lumenal side of the membrane; sequence QSLGFFWVKQQPWYEVWHPKSDACNTTGSGFWNSSHVDNETELDEHNIQNYEN. Residues 1074-1094 form a helical membrane-spanning segment; it reads TTVFFISSFQYLIVAIAFSKG. Residues 1095–1105 are Cytoplasmic-facing; sequence KPFRQPCYKNY. A helical transmembrane segment spans residues 1106 to 1126; it reads FFVFSVIFLYIFILFIMLYPV. Topologically, residues 1127 to 1143 are lumenal; it reads ASVDQVLQIVCVPYQWR. Residues 1144-1164 traverse the membrane as a helical segment; the sequence is VTMLIIVLVNAFVSITVEESV. Over 1165-1226 the chain is Cytoplasmic; the sequence is DRWGKCCLPW…NGSCQIITIT (62 aa).

This sequence belongs to the cation transport ATPase (P-type) (TC 3.A.3) family. Type V subfamily. Broadly expressed.

Its subcellular location is the recycling endosome membrane. The protein localises to the early endosome membrane. It localises to the late endosome membrane. The enzyme catalyses putrescine(out) + ATP + H2O = putrescine(in) + ADP + phosphate + H(+). Its function is as follows. ATP-driven pump involved in endocytosis-dependent polyamine transport. Uses ATP as an energy source to transfer polyamine precursor putrescine from the endosomal compartment to the cytosol. This chain is Polyamine-transporting ATPase 13A3, found in Homo sapiens (Human).